We begin with the raw amino-acid sequence, 1328 residues long: 5'-3' exoribonuclease 1 (1328 aa).

The tract at residues 1211–1328 (AGKNRKTNVS…VQPMGKLQIN (118 aa)) is disordered. Over residues 1217–1231 (TNVSANNVSQGTDSR) the composition is skewed to polar residues. Over residues 1275-1286 (HKSKSKFSKGNH) the composition is skewed to basic residues.

This sequence belongs to the 5'-3' exonuclease family. Monomer. It depends on Mg(2+) as a cofactor.

Its subcellular location is the cytoplasm. The protein localises to the perinuclear region. It is found in the P-body. With respect to regulation, strand exchange activity is enhanced by fatty acid synthase (stimulatory factor P190/210). Multifunctional protein that exhibits several independent functions at different levels of the cellular processes. 5'-3' exonuclease component of the nonsense-mediated mRNA decay (NMD) which is a highly conserved mRNA degradation pathway, an RNA surveillance system whose role is to identify and rid cells of mRNA with premature termination codons and thus prevents accumulation of potentially harmful truncated proteins. Involved in the degradation of several hypomodified mature tRNA species and participates in the 5'-processing or the degradation of the snoRNA precursors and rRNA processing. This is 5'-3' exoribonuclease 1 (exo2) from Schizosaccharomyces pombe (strain 972 / ATCC 24843) (Fission yeast).